We begin with the raw amino-acid sequence, 121 residues long: Large ribosomal subunit protein uL18 (121 aa).

Belongs to the universal ribosomal protein uL18 family. Part of the 50S ribosomal subunit; part of the 5S rRNA/L5/L18/L25 subcomplex. Contacts the 5S and 23S rRNAs.

Functionally, this is one of the proteins that bind and probably mediate the attachment of the 5S RNA into the large ribosomal subunit, where it forms part of the central protuberance. The protein is Large ribosomal subunit protein uL18 of Paraburkholderia phytofirmans (strain DSM 17436 / LMG 22146 / PsJN) (Burkholderia phytofirmans).